The chain runs to 822 residues: DNA-directed RNA polymerase subunit beta N-terminal section (822 aa).

A disordered region spans residues 376 to 408; it reads ELTEGNPSSKSQTKNKTSASKKSKTLNVANTKG. A compositionally biased stretch (low complexity) spans 383–393; the sequence is SSKSQTKNKTS.

It belongs to the RNA polymerase beta chain family. As to quaternary structure, in plastids the minimal PEP RNA polymerase catalytic core is composed of four subunits: alpha, beta, beta', and beta''. When a (nuclear-encoded) sigma factor is associated with the core the holoenzyme is formed, which can initiate transcription.

It is found in the plastid. The protein localises to the chloroplast. It catalyses the reaction RNA(n) + a ribonucleoside 5'-triphosphate = RNA(n+1) + diphosphate. Its function is as follows. DNA-dependent RNA polymerase catalyzes the transcription of DNA into RNA using the four ribonucleoside triphosphates as substrates. The polypeptide is DNA-directed RNA polymerase subunit beta N-terminal section (rpoB1) (Chlamydomonas reinhardtii (Chlamydomonas smithii)).